The sequence spans 361 residues: Chorismate synthase (361 aa).

Arg-47 contributes to the NADP(+) binding site. Residues 124-126 (RAS), Gly-286, 301-305 (KPTAT), and Arg-327 contribute to the FMN site.

This sequence belongs to the chorismate synthase family. As to quaternary structure, homotetramer. FMNH2 serves as cofactor.

It catalyses the reaction 5-O-(1-carboxyvinyl)-3-phosphoshikimate = chorismate + phosphate. It participates in metabolic intermediate biosynthesis; chorismate biosynthesis; chorismate from D-erythrose 4-phosphate and phosphoenolpyruvate: step 7/7. Functionally, catalyzes the anti-1,4-elimination of the C-3 phosphate and the C-6 proR hydrogen from 5-enolpyruvylshikimate-3-phosphate (EPSP) to yield chorismate, which is the branch point compound that serves as the starting substrate for the three terminal pathways of aromatic amino acid biosynthesis. This reaction introduces a second double bond into the aromatic ring system. The sequence is that of Chorismate synthase from Prochlorococcus marinus (strain NATL2A).